Reading from the N-terminus, the 348-residue chain is MTKPNGSSLDDHLDAEVARDASLADTAATIRALAAAAIDVSETVGRGALAGDLAAQGEHNSDGDVQKALDVIAHKRFMQALEEAPVAQVASEEAEDVVSLKPGAPLAVAIDPLDGSSNIGVGMVVGTIFGIRPVTLGTDVNASFLTPGTTQTAAGFVVYGPATTFVVTLGNGTRIFTLDRAEKVFRLTHDALQIVPSANEYAINASNVRHWDGPVKSFIEDCLRGTEGPRDRDFNMRWTAALVADAQRVLIRGGVFLYPGDNRKGYAQGRLRLLYETAPIAFLIEQAGGAATDGQARIMERVATKIHERSPLVFGSTEEVECVAKYYDGRQPSAGRSPLFGQRGLMRS.

Mg(2+) is bound by residues E92, D111, L113, and D114. Residues 114-117 (DGSS) and N204 each bind substrate. Residue E276 participates in Mg(2+) binding.

It belongs to the FBPase class 1 family. In terms of assembly, homotetramer. Mg(2+) is required as a cofactor.

Its subcellular location is the cytoplasm. The enzyme catalyses beta-D-fructose 1,6-bisphosphate + H2O = beta-D-fructose 6-phosphate + phosphate. Its pathway is carbohydrate biosynthesis; gluconeogenesis. This Methylorubrum populi (strain ATCC BAA-705 / NCIMB 13946 / BJ001) (Methylobacterium populi) protein is Fructose-1,6-bisphosphatase class 1.